Consider the following 126-residue polypeptide: Large ribosomal subunit protein bL21 (126 aa).

A disordered region spans residues 105-126; it reads KKPSVGPRAKRTKAAPAAEAAE.

As to quaternary structure, contacts protein L20. Part of the 50S ribosomal subunit.

In terms of biological role, this protein binds to 23S rRNA in the presence of protein L20. The protein is Large ribosomal subunit protein bL21 of Rhodopseudomonas palustris (strain ATCC BAA-98 / CGA009).